A 488-amino-acid chain; its full sequence is Phenylalanine--tRNA ligase alpha subunit (488 aa).

L-phenylalanine contacts are provided by residues T332, 371 to 373 (QLD), and F410. E412 contacts Mg(2+). L-phenylalanine is bound at residue F435.

The protein belongs to the class-II aminoacyl-tRNA synthetase family. Phe-tRNA synthetase alpha subunit type 2 subfamily. Tetramer of two alpha and two beta subunits. The cofactor is Mg(2+).

The protein resides in the cytoplasm. It carries out the reaction tRNA(Phe) + L-phenylalanine + ATP = L-phenylalanyl-tRNA(Phe) + AMP + diphosphate + H(+). In Aeropyrum pernix (strain ATCC 700893 / DSM 11879 / JCM 9820 / NBRC 100138 / K1), this protein is Phenylalanine--tRNA ligase alpha subunit.